A 230-amino-acid chain; its full sequence is Transmembrane protein 225 (230 aa).

At 1-8 (MMHIPNRS) the chain is on the cytoplasmic side. A helical membrane pass occupies residues 9-29 (IQAANIFFSSGAILLLIVGLI). At 30–71 (MEDWVELIPKVRKDKTTHSPWLGCCPPFWPEESLEVVRRIMR) the chain is on the extracellular side. The chain crosses the membrane as a helical span at residues 72-92 (MTLNISIYLNLIIGLQFSYMI). Topologically, residues 93-99 (SQNKCVH) are cytoplasmic. A helical membrane pass occupies residues 100–120 (LLVGFLSFFAGCLLFYAIIVY). The Extracellular portion of the chain corresponds to 121–139 (HHKLNKGQYVYFVNYKTKW). Residues 140 to 160 (IAFTVYLTIALFLTCGIFCFI) form a helical membrane-spanning segment. At 161–230 (QSTNRCECMK…TQARRVTWAL (70 aa)) the chain is on the cytoplasmic side. An RVxF motif is present at residues 224–228 (RRVTW).

As to quaternary structure, interacts (via RVxF motif) with PPP1CC. In terms of tissue distribution, expressed in testis, epididymis and spermatozoa (at protein level). Not expressed in brain, heart, lung, liver, spleen, kidney and skeletal muscle.

It localises to the cytoplasmic vesicle. It is found in the secretory vesicle. The protein resides in the acrosome membrane. Probably inhibits protein phosphatase 1 (PP1) in sperm via binding to catalytic subunit PPP1CC. This Mus musculus (Mouse) protein is Transmembrane protein 225 (Tmem225).